Consider the following 337-residue polypeptide: Trace amine-associated receptor 5 (337 aa).

The Extracellular segment spans residues 1-38; it reads MRAVLLPGSGEQPAAFCYQVNGSCPRTVHPLAIRVLIY. Asn-21 carries N-linked (GlcNAc...) asparagine glycosylation. Cystine bridges form between Cys-24–Cys-188 and Cys-99–Cys-192. The chain crosses the membrane as a helical span at residues 39 to 59; the sequence is LACAVGMLITVLGNLFVVFAV. Over 60 to 70 the chain is Cytoplasmic; the sequence is SYFKVLHTPTN. Residues 71–91 traverse the membrane as a helical segment; it reads FLLLSLALADMLLGLLVLPLS. Over 92–109 the chain is Extracellular; it reads TVRSVESCWFFGDFLCRL. A helical membrane pass occupies residues 110-130; that stretch reads HTYLDTLFCLTSIFHLCFISI. The Cytoplasmic segment spans residues 131-154; the sequence is DRHCAICDPLLYPSKFTVRIALRY. A helical membrane pass occupies residues 155-175; that stretch reads IAAGWGIPAAYTAFFLYTDVV. The interval 176–189 is extracellular Loop 2 (ECL2); it reads ERALSQWLEEMPCV. The Extracellular segment spans residues 176 to 204; that stretch reads ERALSQWLEEMPCVGSCQLLFNKFWGWLN. Residues 205-225 traverse the membrane as a helical segment; that stretch reads FPAFFIPCLIMISLYLKIFVV. The Cytoplasmic segment spans residues 226–253; the sequence is ATRQAQQIRTLSQSLSGAVKRERKAAKT. A helical transmembrane segment spans residues 254 to 274; that stretch reads LGIAVGIYLVCWLPFTVDTLV. At 275–284 the chain is on the extracellular side; that stretch reads DSLLNFVTPP. Residues 285 to 307 form a helical membrane-spanning segment; that stretch reads LVFDIFIWFAYFNSACNPIIYVF. Over 308 to 337 the chain is Cytoplasmic; that stretch reads SYRWFRKALKLLLSREILSPRTQTADLFHD.

The protein belongs to the G-protein coupled receptor 1 family.

The protein localises to the cell membrane. Its function is as follows. Olfactory receptor specific for trimethylamine, a trace amine enriched in the urine of male rats, playing a role in social behavior. Also activated by N-methylpiperidine. Trimethylamine is present at high concentration in the urine of male after puberty and acts as an attractant. Trimethylamine-binding causes a conformation change that triggers signaling via G(s)-class of G alpha proteins (GNAL or GNAS). Also required to provide olfactory input into limbic brain areas to regulate emotional behaviors likely via modulation of the serotonin system. This Rattus norvegicus (Rat) protein is Trace amine-associated receptor 5.